The sequence spans 113 residues: Large ribosomal subunit protein bL19 (113 aa).

This sequence belongs to the bacterial ribosomal protein bL19 family.

In terms of biological role, this protein is located at the 30S-50S ribosomal subunit interface and may play a role in the structure and function of the aminoacyl-tRNA binding site. The polypeptide is Large ribosomal subunit protein bL19 (Mycobacterium avium (strain 104)).